We begin with the raw amino-acid sequence, 272 residues long: MASSKFFTVLFLVLLTHANSSNDIYFNFQRFNETNLILQRDASVSSSGQLRLTNLNGNGEPRVGSLGRAFYSAPIQIWDNTTGTVASFATSFTFNIQVPNNAGPADGLAFALVPVGSQPKDKGGFLGLFDGSNSNFHTVAVEFDTLYNKDWDPTERHIGIDVNSIRSIKTTRWDFVNGENAEVLITYDSSTNLLVASLVYPSQKTSFIVSDTVDLKSVLPEWVSVGFSATTGINKGNVETNDVLSWSFASKLSDGTTSEGLNLANLVLNKIL.

The signal sequence occupies residues 1 to 20 (MASSKFFTVLFLVLLTHANS). N-linked (GlcNAc...) (high mannose) asparagine glycosylation is present at N32. N80 carries an N-linked (GlcNAc...) (complex) asparagine glycan.

The protein belongs to the leguminous lectin family. As to quaternary structure, homotetramer. In terms of processing, N-glycosylated on Asn-80; contains xylose.

Functionally, this insecticidal carbohydrate-binding lectin is toxic for the cowpea weevil. The sequence is that of Leucoagglutinating phytohemagglutinin (DLEC2) from Phaseolus vulgaris (Kidney bean).